Here is a 209-residue protein sequence, read N- to C-terminus: Protein-L-isoaspartate O-methyltransferase (209 aa).

Residue serine 60 is part of the active site.

Belongs to the methyltransferase superfamily. L-isoaspartyl/D-aspartyl protein methyltransferase family.

Its subcellular location is the cytoplasm. It carries out the reaction [protein]-L-isoaspartate + S-adenosyl-L-methionine = [protein]-L-isoaspartate alpha-methyl ester + S-adenosyl-L-homocysteine. Its function is as follows. Catalyzes the methyl esterification of L-isoaspartyl residues in peptides and proteins that result from spontaneous decomposition of normal L-aspartyl and L-asparaginyl residues. It plays a role in the repair and/or degradation of damaged proteins. The protein is Protein-L-isoaspartate O-methyltransferase of Photobacterium profundum (strain SS9).